A 75-amino-acid chain; its full sequence is UPF0352 protein YPTB1297 (75 aa).

The protein belongs to the UPF0352 family.

This chain is UPF0352 protein YPTB1297, found in Yersinia pseudotuberculosis serotype I (strain IP32953).